The sequence spans 270 residues: Thiazole synthase (270 aa).

Lys111 (schiff-base intermediate with DXP) is an active-site residue. 1-deoxy-D-xylulose 5-phosphate contacts are provided by residues Gly172, 198 to 199, and 220 to 221; these read AG and NS. Positions 249-270 are disordered; the sequence is AGRLPTRAQASPSSPTTGKVND. The segment covering 256–270 has biased composition (polar residues); it reads AQASPSSPTTGKVND.

This sequence belongs to the ThiG family. As to quaternary structure, homotetramer. Forms heterodimers with either ThiH or ThiS.

Its subcellular location is the cytoplasm. It catalyses the reaction [ThiS sulfur-carrier protein]-C-terminal-Gly-aminoethanethioate + 2-iminoacetate + 1-deoxy-D-xylulose 5-phosphate = [ThiS sulfur-carrier protein]-C-terminal Gly-Gly + 2-[(2R,5Z)-2-carboxy-4-methylthiazol-5(2H)-ylidene]ethyl phosphate + 2 H2O + H(+). Its pathway is cofactor biosynthesis; thiamine diphosphate biosynthesis. Its function is as follows. Catalyzes the rearrangement of 1-deoxy-D-xylulose 5-phosphate (DXP) to produce the thiazole phosphate moiety of thiamine. Sulfur is provided by the thiocarboxylate moiety of the carrier protein ThiS. In vitro, sulfur can be provided by H(2)S. The sequence is that of Thiazole synthase from Synechococcus sp. (strain WH7803).